We begin with the raw amino-acid sequence, 349 residues long: Anthranilate phosphoribosyltransferase (349 aa).

5-phospho-alpha-D-ribose 1-diphosphate is bound by residues Gly-82, 85–86, 92–95, 110–118, and Ser-122; these read GD, NVSS, and KHGNRAVSG. Gly-82 is an anthranilate binding site. Ser-94 is a binding site for Mg(2+). Asn-113 provides a ligand contact to anthranilate. Anthranilate is bound at residue Arg-168. 2 residues coordinate Mg(2+): Asp-227 and Glu-228.

The protein belongs to the anthranilate phosphoribosyltransferase family. In terms of assembly, homodimer. Mg(2+) serves as cofactor.

It catalyses the reaction N-(5-phospho-beta-D-ribosyl)anthranilate + diphosphate = 5-phospho-alpha-D-ribose 1-diphosphate + anthranilate. Its pathway is amino-acid biosynthesis; L-tryptophan biosynthesis; L-tryptophan from chorismate: step 2/5. Functionally, catalyzes the transfer of the phosphoribosyl group of 5-phosphorylribose-1-pyrophosphate (PRPP) to anthranilate to yield N-(5'-phosphoribosyl)-anthranilate (PRA). The chain is Anthranilate phosphoribosyltransferase from Pseudomonas paraeruginosa (strain DSM 24068 / PA7) (Pseudomonas aeruginosa (strain PA7)).